The primary structure comprises 150 residues: Protein-export protein SecB (150 aa).

This sequence belongs to the SecB family. As to quaternary structure, homotetramer, a dimer of dimers. One homotetramer interacts with 1 SecA dimer.

The protein localises to the cytoplasm. Its function is as follows. One of the proteins required for the normal export of preproteins out of the cell cytoplasm. It is a molecular chaperone that binds to a subset of precursor proteins, maintaining them in a translocation-competent state. It also specifically binds to its receptor SecA. In Polaromonas sp. (strain JS666 / ATCC BAA-500), this protein is Protein-export protein SecB.